A 191-amino-acid polypeptide reads, in one-letter code: Transcriptional regulator MET32 (191 aa).

Residues 70 to 96 (KKENALPKPPKSSKSKPQDRRNSTGEK) are disordered. Positions 85-96 (KPQDRRNSTGEK) are enriched in basic and acidic residues. The C2H2-type 1 zinc finger occupies 98–120 (FKCAKCSLEFSRSSDLRRHEKTH). The C2H2-type 2; atypical zinc-finger motif lies at 126–150 (NICPQCGKGFARKDALKRHYDTLTC).

Interacts with MET4 and MET28.

The protein resides in the cytoplasm. It is found in the nucleus. Its function is as follows. Auxiliary transcriptional regulator of sulfur amino acid metabolism. Involved in the transcriptional activation of MET28. This Saccharomyces cerevisiae (strain ATCC 204508 / S288c) (Baker's yeast) protein is Transcriptional regulator MET32 (MET32).